The following is a 57-amino-acid chain: Small ribosomal subunit protein bS21 (57 aa).

The tract at residues 35–57 is disordered; the sequence is REFYEKPSVRRKKKSEAARKRKY. Over residues 43-57 the composition is skewed to basic residues; the sequence is VRRKKKSEAARKRKY.

It belongs to the bacterial ribosomal protein bS21 family.

The protein is Small ribosomal subunit protein bS21 of Bacillus licheniformis (strain ATCC 14580 / DSM 13 / JCM 2505 / CCUG 7422 / NBRC 12200 / NCIMB 9375 / NCTC 10341 / NRRL NRS-1264 / Gibson 46).